Consider the following 87-residue polypeptide: LYR motif-containing protein 2 (87 aa).

The N-terminal 19 residues, 1-19, are a transit peptide targeting the mitochondrion; the sequence is MGSRLPPAALTLKQFLVRQ.

The protein belongs to the complex I LYR family.

It is found in the mitochondrion. In terms of biological role, involved in efficient integration of the N-module into mitochondrial respiratory chain complex I. This chain is LYR motif-containing protein 2 (lyrm2), found in Xenopus tropicalis (Western clawed frog).